Consider the following 159-residue polypeptide: uncharacterized protein (159 aa).

Helical transmembrane passes span 76 to 96 (AIKY…FIGK), 104 to 124 (IVML…FSPT), and 131 to 151 (FGAG…VIGG).

It localises to the membrane. This is an uncharacterized protein from Acanthamoeba polyphaga (Amoeba).